Reading from the N-terminus, the 142-residue chain is ATP synthase epsilon chain (142 aa).

The protein belongs to the ATPase epsilon chain family. F-type ATPases have 2 components, CF(1) - the catalytic core - and CF(0) - the membrane proton channel. CF(1) has five subunits: alpha(3), beta(3), gamma(1), delta(1), epsilon(1). CF(0) has three main subunits: a, b and c.

The protein localises to the cell inner membrane. Its function is as follows. Produces ATP from ADP in the presence of a proton gradient across the membrane. The chain is ATP synthase epsilon chain from Shewanella loihica (strain ATCC BAA-1088 / PV-4).